We begin with the raw amino-acid sequence, 487 residues long: Structure-specific endonuclease subunit SLX1 (487 aa).

In terms of domain architecture, GIY-YIG spans 27-109; it reads PFYACYLLRS…QKPELSRHLR (83 aa). A disordered region spans residues 44-69; the sequence is RTYVGSTPDPPRRIRQHNGELKQGAW. The segment at 262-328 adopts an SLX1-type zinc-finger fold; it reads CHLCQERIAF…LPYQGLCPNC (67 aa). A compositionally biased stretch (basic and acidic residues) spans 359 to 396; the sequence is KAEKAEKAEKAEKAEKAEKAEKAGRKVRQREMKTKKGD. Disordered regions lie at residues 359 to 407 and 433 to 475; these read KAEK…QPES and PARS…SEPE. The segment covering 397 to 407 has biased composition (polar residues); sequence QSNGTVAQPES. Positions 438 to 455 are enriched in basic and acidic residues; the sequence is KSKDVGGEGIRHSTHTDD. A compositionally biased stretch (acidic residues) spans 465–475; the sequence is ETEDESESEPE.

The protein belongs to the SLX1 family. As to quaternary structure, forms a heterodimer with SLX4. It depends on a divalent metal cation as a cofactor.

The protein localises to the nucleus. Functionally, catalytic subunit of the SLX1-SLX4 structure-specific endonuclease that resolves DNA secondary structures generated during DNA repair and recombination. Has endonuclease activity towards branched DNA substrates, introducing single-strand cuts in duplex DNA close to junctions with ss-DNA. This is Structure-specific endonuclease subunit SLX1 from Cryptococcus neoformans var. neoformans serotype D (strain B-3501A) (Filobasidiella neoformans).